A 252-amino-acid polypeptide reads, in one-letter code: Phosphoribosyl-ATP pyrophosphatase (252 aa).

This sequence belongs to the PRA-PH family.

It is found in the cytoplasm. It carries out the reaction 1-(5-phospho-beta-D-ribosyl)-ATP + H2O = 1-(5-phospho-beta-D-ribosyl)-5'-AMP + diphosphate + H(+). It participates in amino-acid biosynthesis; L-histidine biosynthesis; L-histidine from 5-phospho-alpha-D-ribose 1-diphosphate: step 2/9. This is Phosphoribosyl-ATP pyrophosphatase from Magnetococcus marinus (strain ATCC BAA-1437 / JCM 17883 / MC-1).